The primary structure comprises 188 residues: GTP cyclohydrolase 1 (188 aa).

Cys73, His76, and Cys144 together coordinate Zn(2+).

This sequence belongs to the GTP cyclohydrolase I family. Homomer.

It carries out the reaction GTP + H2O = 7,8-dihydroneopterin 3'-triphosphate + formate + H(+). It participates in cofactor biosynthesis; 7,8-dihydroneopterin triphosphate biosynthesis; 7,8-dihydroneopterin triphosphate from GTP: step 1/1. The sequence is that of GTP cyclohydrolase 1 from Caldivirga maquilingensis (strain ATCC 700844 / DSM 13496 / JCM 10307 / IC-167).